We begin with the raw amino-acid sequence, 100 residues long: Toxin Rv0299 (100 aa).

Its function is as follows. Toxic component of a type II toxin-antitoxin (TA) system. Upon expression in M.smegmatis inhibits colony formation. Its toxic effect is neutralized by coexpression with cognate antitoxin Rv0298/MT0312. This is Toxin Rv0299 from Mycobacterium tuberculosis (strain ATCC 25618 / H37Rv).